A 484-amino-acid polypeptide reads, in one-letter code: BAHD acyltransferase DCR (484 aa).

The active-site Proton acceptor is the His168. Residues 211–233 form a disordered region; the sequence is LDLTAPKDPNETSNGEDAANPTV. The Proton acceptor role is filled by Asp394. The segment at 452 to 484 is disordered; that stretch reads EEEEDDGKKLTNGNGHVNGNGNGYVNGNGNGFV. Over residues 467–484 the composition is skewed to gly residues; it reads HVNGNGNGYVNGNGNGFV.

This sequence belongs to the plant acyltransferase family. In terms of tissue distribution, expressed in root caps and lateral root emerging sites, in trichomes, in epidermis in stems, sepals and anther filaments, and in pollen grains and torpedo stage seeds.

The protein localises to the cytoplasm. The protein resides in the cytosol. Required for incorporation of 9(10),16-dihydroxy-hexadecanoic acid into cutin. In Arabidopsis thaliana (Mouse-ear cress), this protein is BAHD acyltransferase DCR (DCR).